Here is a 125-residue protein sequence, read N- to C-terminus: Holo-[acyl-carrier-protein] synthase (125 aa).

The Mg(2+) site is built by Asp8 and Glu57.

This sequence belongs to the P-Pant transferase superfamily. AcpS family. Mg(2+) is required as a cofactor.

The protein resides in the cytoplasm. The enzyme catalyses apo-[ACP] + CoA = holo-[ACP] + adenosine 3',5'-bisphosphate + H(+). Transfers the 4'-phosphopantetheine moiety from coenzyme A to a Ser of acyl-carrier-protein. This chain is Holo-[acyl-carrier-protein] synthase, found in Neisseria meningitidis serogroup A / serotype 4A (strain DSM 15465 / Z2491).